The following is a 231-amino-acid chain: Urease accessory protein UreF (231 aa).

It belongs to the UreF family. As to quaternary structure, ureD, UreF and UreG form a complex that acts as a GTP-hydrolysis-dependent molecular chaperone, activating the urease apoprotein by helping to assemble the nickel containing metallocenter of UreC. The UreE protein probably delivers the nickel.

The protein localises to the cytoplasm. Functionally, required for maturation of urease via the functional incorporation of the urease nickel metallocenter. The sequence is that of Urease accessory protein UreF from Magnetococcus marinus (strain ATCC BAA-1437 / JCM 17883 / MC-1).